We begin with the raw amino-acid sequence, 313 residues long: Protein ABA AND ROS SENSITIVE 1 (313 aa).

A Nuclear localization signal 1 motif is present at residues A5–R12. A C2H2-type zinc finger spans residues C39–H61. Over residues A115 to K131 the composition is skewed to basic and acidic residues. Disordered stretches follow at residues A115–G189, M232–Y254, and A271–L313. The span at T155–P176 shows a compositional bias: polar residues. Acidic residues predominate over residues M232 to Q248. Residues M232–A271 adopt a coiled-coil conformation. The Nuclear localization signal 2 motif lies at A274–E281. Over residues E293–A305 the composition is skewed to acidic residues.

Mostly expressed in siliques and, to a lower extent, in roots. Barely deteclable in leaves and stems.

It is found in the nucleus. It localises to the cytoplasm. Its function is as follows. Essential for breaking seed dormancy before seed germination. Prevents reactive oxygen species (ROS) accumulation in response to abscisic acid (ABA) and oxidative stress, probably by repressing the accumulation of ABA-induced ROS-scavenging enzymes (e.g. CSD3). The polypeptide is Protein ABA AND ROS SENSITIVE 1 (Arabidopsis thaliana (Mouse-ear cress)).